Here is a 215-residue protein sequence, read N- to C-terminus: Probable GTP-binding protein EngB (215 aa).

The region spanning 26–200 is the EngB-type G domain; that stretch reads EGIEVAFAGR…RAKLDEWFAP (175 aa). GTP is bound by residues 34–41, 61–65, 79–82, 146–149, and 179–181; these read GRSNAGKS, GRTQL, DLPG, TKAD, and FSS. Residues Ser41 and Thr63 each contribute to the Mg(2+) site.

Belongs to the TRAFAC class TrmE-Era-EngA-EngB-Septin-like GTPase superfamily. EngB GTPase family. Requires Mg(2+) as cofactor.

Its function is as follows. Necessary for normal cell division and for the maintenance of normal septation. The sequence is that of Probable GTP-binding protein EngB from Aliivibrio fischeri (strain MJ11) (Vibrio fischeri).